Here is a 339-residue protein sequence, read N- to C-terminus: Tetraacyldisaccharide 4'-kinase (339 aa).

Position 58-65 (58-65 (TVGGSGKT)) interacts with ATP.

This sequence belongs to the LpxK family.

The enzyme catalyses a lipid A disaccharide + ATP = a lipid IVA + ADP + H(+). It participates in glycolipid biosynthesis; lipid IV(A) biosynthesis; lipid IV(A) from (3R)-3-hydroxytetradecanoyl-[acyl-carrier-protein] and UDP-N-acetyl-alpha-D-glucosamine: step 6/6. Transfers the gamma-phosphate of ATP to the 4'-position of a tetraacyldisaccharide 1-phosphate intermediate (termed DS-1-P) to form tetraacyldisaccharide 1,4'-bis-phosphate (lipid IVA). The sequence is that of Tetraacyldisaccharide 4'-kinase from Shewanella baltica (strain OS155 / ATCC BAA-1091).